A 108-amino-acid chain; its full sequence is Signal recognition particle 19 kDa protein (108 aa).

Belongs to the SRP19 family. In terms of assembly, part of the signal recognition particle protein translocation system, which is composed of SRP and FtsY. Archaeal SRP consists of a 7S RNA molecule of 300 nucleotides and two protein subunits: SRP54 and SRP19.

It is found in the cytoplasm. Functionally, involved in targeting and insertion of nascent membrane proteins into the cytoplasmic membrane. Binds directly to 7S RNA and mediates binding of the 54 kDa subunit of the SRP. The sequence is that of Signal recognition particle 19 kDa protein from Thermococcus kodakarensis (strain ATCC BAA-918 / JCM 12380 / KOD1) (Pyrococcus kodakaraensis (strain KOD1)).